The chain runs to 335 residues: Methionine import ATP-binding protein MetN 2 (335 aa).

An ABC transporter domain is found at 2–242 (IEFHDVHKTY…PQHPTTRRFV (241 aa)). 38–45 (GHSGAGKS) is a binding site for ATP.

This sequence belongs to the ABC transporter superfamily. Methionine importer (TC 3.A.1.24) family. In terms of assembly, the complex is composed of two ATP-binding proteins (MetN), two transmembrane proteins (MetI) and a solute-binding protein (MetQ).

The protein localises to the cell inner membrane. It catalyses the reaction L-methionine(out) + ATP + H2O = L-methionine(in) + ADP + phosphate + H(+). The enzyme catalyses D-methionine(out) + ATP + H2O = D-methionine(in) + ADP + phosphate + H(+). Its function is as follows. Part of the ABC transporter complex MetNIQ involved in methionine import. Responsible for energy coupling to the transport system. The protein is Methionine import ATP-binding protein MetN 2 of Pseudomonas aeruginosa (strain UCBPP-PA14).